A 110-amino-acid polypeptide reads, in one-letter code: Large ribosomal subunit protein uL22 (110 aa).

Belongs to the universal ribosomal protein uL22 family. In terms of assembly, part of the 50S ribosomal subunit.

Its function is as follows. This protein binds specifically to 23S rRNA; its binding is stimulated by other ribosomal proteins, e.g. L4, L17, and L20. It is important during the early stages of 50S assembly. It makes multiple contacts with different domains of the 23S rRNA in the assembled 50S subunit and ribosome. In terms of biological role, the globular domain of the protein is located near the polypeptide exit tunnel on the outside of the subunit, while an extended beta-hairpin is found that lines the wall of the exit tunnel in the center of the 70S ribosome. This chain is Large ribosomal subunit protein uL22, found in Pseudoalteromonas translucida (strain TAC 125).